The following is a 160-amino-acid chain: Large ribosomal subunit protein uL22c (160 aa).

Belongs to the universal ribosomal protein uL22 family. In terms of assembly, part of the 50S ribosomal subunit.

The protein resides in the plastid. The protein localises to the chloroplast. Its function is as follows. This protein binds specifically to 23S rRNA. In terms of biological role, the globular domain of the protein is located near the polypeptide exit tunnel on the outside of the subunit, while an extended beta-hairpin is found that lines the wall of the exit tunnel in the center of the 70S ribosome. The protein is Large ribosomal subunit protein uL22c (rpl22) of Panax ginseng (Korean ginseng).